Consider the following 276-residue polypeptide: Diaminopimelate epimerase (276 aa).

Asn-13, Gln-46, and Asn-66 together coordinate substrate. The Proton donor role is filled by Cys-75. Substrate-binding positions include 76–77 (GN), Asn-159, Asn-192, and 210–211 (ER). Cys-219 acts as the Proton acceptor in catalysis. A substrate-binding site is contributed by 220–221 (GT).

The protein belongs to the diaminopimelate epimerase family. In terms of assembly, homodimer.

The protein localises to the cytoplasm. The enzyme catalyses (2S,6S)-2,6-diaminopimelate = meso-2,6-diaminopimelate. It functions in the pathway amino-acid biosynthesis; L-lysine biosynthesis via DAP pathway; DL-2,6-diaminopimelate from LL-2,6-diaminopimelate: step 1/1. Functionally, catalyzes the stereoinversion of LL-2,6-diaminopimelate (L,L-DAP) to meso-diaminopimelate (meso-DAP), a precursor of L-lysine and an essential component of the bacterial peptidoglycan. This is Diaminopimelate epimerase from Azotobacter vinelandii (strain DJ / ATCC BAA-1303).